The sequence spans 479 residues: Anaerobic nitric oxide reductase flavorubredoxin (479 aa).

The tract at residues 30–210 (LRGSSYNSYL…PFSRLVTPKI (181 aa)) is zinc metallo-hydrolase. His79, Glu81, Asp83, His147, Asp166, and His227 together coordinate Fe cation. The 140-residue stretch at 254 to 393 (ITIFYDTMSN…LCRQHGRDIA (140 aa)) folds into the Flavodoxin-like domain. FMN-binding positions include 260-264 (TMSNN) and 342-369 (AFGSHGWSGGAVDRLSTRLQDAGFEMSL). Residues 423-474 (GPKMQCSVCQWIYDPALGEPLQDVAPGTPWSDVPDNFLCPECSLGKDVFDVL) enclose the Rubredoxin-like domain. Cys428, Cys431, Cys461, and Cys464 together coordinate Fe cation.

It in the N-terminal section; belongs to the zinc metallo-hydrolase group 3 family. Homotetramer. It depends on Fe cation as a cofactor. The cofactor is FMN.

The protein localises to the cytoplasm. The protein operates within nitrogen metabolism; nitric oxide reduction. Its function is as follows. Anaerobic nitric oxide reductase; uses NADH to detoxify nitric oxide (NO), protecting several 4Fe-4S NO-sensitive enzymes. Has at least 2 reductase partners, only one of which (NorW, flavorubredoxin reductase) has been identified. NO probably binds to the di-iron center; electrons enter from the NorW at rubredoxin and are transferred sequentially to the FMN center and the di-iron center. Also able to function as an aerobic oxygen reductase. The chain is Anaerobic nitric oxide reductase flavorubredoxin from Salmonella typhi.